A 176-amino-acid polypeptide reads, in one-letter code: Ribosome maturation factor RimP (176 aa).

It belongs to the RimP family.

It localises to the cytoplasm. Required for maturation of 30S ribosomal subunits. The sequence is that of Ribosome maturation factor RimP from Chlorobium limicola (strain DSM 245 / NBRC 103803 / 6330).